The chain runs to 319 residues: Quinolinate synthase (319 aa).

The iminosuccinate site is built by His-34 and Ser-51. Cys-96 serves as a coordination point for [4Fe-4S] cluster. Iminosuccinate contacts are provided by residues 122 to 124 (YIN) and Ser-139. A [4Fe-4S] cluster-binding site is contributed by Cys-182. Iminosuccinate is bound by residues 208-210 (HPE) and Thr-225. Cys-276 contributes to the [4Fe-4S] cluster binding site.

Belongs to the quinolinate synthase family. Type 2 subfamily. The cofactor is [4Fe-4S] cluster.

It is found in the cytoplasm. The catalysed reaction is iminosuccinate + dihydroxyacetone phosphate = quinolinate + phosphate + 2 H2O + H(+). It functions in the pathway cofactor biosynthesis; NAD(+) biosynthesis; quinolinate from iminoaspartate: step 1/1. Catalyzes the condensation of iminoaspartate with dihydroxyacetone phosphate to form quinolinate. The protein is Quinolinate synthase of Thermosynechococcus vestitus (strain NIES-2133 / IAM M-273 / BP-1).